Consider the following 248-residue polypeptide: Ubiquinone/menaquinone biosynthesis C-methyltransferase UbiE (248 aa).

Ser68 and Asp92 together coordinate S-adenosyl-L-methionine.

The protein belongs to the class I-like SAM-binding methyltransferase superfamily. MenG/UbiE family.

The catalysed reaction is a 2-demethylmenaquinol + S-adenosyl-L-methionine = a menaquinol + S-adenosyl-L-homocysteine + H(+). It carries out the reaction a 2-methoxy-6-(all-trans-polyprenyl)benzene-1,4-diol + S-adenosyl-L-methionine = a 5-methoxy-2-methyl-3-(all-trans-polyprenyl)benzene-1,4-diol + S-adenosyl-L-homocysteine + H(+). It functions in the pathway quinol/quinone metabolism; menaquinone biosynthesis; menaquinol from 1,4-dihydroxy-2-naphthoate: step 2/2. The protein operates within cofactor biosynthesis; ubiquinone biosynthesis. In terms of biological role, methyltransferase required for the conversion of demethylmenaquinol (DMKH2) to menaquinol (MKH2) and the conversion of 2-polyprenyl-6-methoxy-1,4-benzoquinol (DDMQH2) to 2-polyprenyl-3-methyl-6-methoxy-1,4-benzoquinol (DMQH2). This chain is Ubiquinone/menaquinone biosynthesis C-methyltransferase UbiE, found in Rickettsia africae (strain ESF-5).